The primary structure comprises 766 residues: Pumilio domain-containing protein 12 (766 aa).

Disordered regions lie at residues 63-98 (KKSS…KSKK) and 152-197 (AQEE…GDES). Over residues 79 to 88 (SLCSESSFGS) the composition is skewed to polar residues. Residues 179 to 193 (PADDENLESVDEQAG) are compositionally biased toward acidic residues. Residues 245-602 (ARAQKCKELW…LYAGITENLY (358 aa)) form the PUM-HD domain. 4 Pumilio repeats span residues 313–348 (ELTP…IIIN), 461–496 (SLKD…LIVK), 497–534 (NFKD…VIVS), and 535–571 (ELAN…REIT).

The chain is Pumilio domain-containing protein 12 (puf-12) from Caenorhabditis elegans.